The following is a 297-amino-acid chain: Small ribosomal subunit biogenesis GTPase RsgA (297 aa).

Residues 65-223 enclose the CP-type G domain; sequence RNELVRPPVA…VADTPGFSAI (159 aa). GTP is bound by residues 114-117 and 166-174; these read TKVD and GQSGAGKST. Residues Cys247, Cys252, His254, and Cys260 each contribute to the Zn(2+) site.

It belongs to the TRAFAC class YlqF/YawG GTPase family. RsgA subfamily. In terms of assembly, monomer. Associates with 30S ribosomal subunit, binds 16S rRNA. The cofactor is Zn(2+).

The protein localises to the cytoplasm. In terms of biological role, one of several proteins that assist in the late maturation steps of the functional core of the 30S ribosomal subunit. Helps release RbfA from mature subunits. May play a role in the assembly of ribosomal proteins into the subunit. Circularly permuted GTPase that catalyzes slow GTP hydrolysis, GTPase activity is stimulated by the 30S ribosomal subunit. The protein is Small ribosomal subunit biogenesis GTPase RsgA of Enterococcus faecalis (strain ATCC 700802 / V583).